Here is an 81-residue protein sequence, read N- to C-terminus: MAGKPVERPFSDILTSIRYWVIHSITIPALFIAGWLFVSTGLAYDVFGSPRPNEYFTEDRQDAPLVTDRFNALEQVKKLSQ.

A helical transmembrane segment spans residues 21–35 (VIHSITIPALFIAGW). Histidine 23 is a binding site for heme.

This sequence belongs to the PsbE/PsbF family. As to quaternary structure, heterodimer of an alpha subunit and a beta subunit. PSII is composed of 1 copy each of membrane proteins PsbA, PsbB, PsbC, PsbD, PsbE, PsbF, PsbH, PsbI, PsbJ, PsbK, PsbL, PsbM, PsbT, PsbX, PsbY, PsbZ, Psb30/Ycf12, at least 3 peripheral proteins of the oxygen-evolving complex and a large number of cofactors. It forms dimeric complexes. Heme b serves as cofactor.

It is found in the plastid. The protein localises to the chloroplast thylakoid membrane. Functionally, this b-type cytochrome is tightly associated with the reaction center of photosystem II (PSII). PSII is a light-driven water:plastoquinone oxidoreductase that uses light energy to abstract electrons from H(2)O, generating O(2) and a proton gradient subsequently used for ATP formation. It consists of a core antenna complex that captures photons, and an electron transfer chain that converts photonic excitation into a charge separation. The polypeptide is Cytochrome b559 subunit alpha (Tetradesmus obliquus (Green alga)).